A 294-amino-acid polypeptide reads, in one-letter code: Proline iminopeptidase (294 aa).

Positions 28-278 (PLLLLHGGPG…GCGHMPFVQE (251 aa)) constitute an AB hydrolase-1 domain. Residue S106 is the Nucleophile of the active site. D245 is an active-site residue. H272 functions as the Proton donor in the catalytic mechanism.

Belongs to the peptidase S33 family. As to quaternary structure, homotrimer.

The protein resides in the cell envelope. The catalysed reaction is Release of N-terminal proline from a peptide.. Its activity is regulated as follows. Inhibited by 3,4-DCI, but no significant effect on enzyme activity by pepstatin A, E-64, 1,10-phenanthroline or EDTA. Releases the N-terminal proline from various substrates. Cleaves Pro-betaNA (L-prolyl-beta-naphthylamide) effectively. This is Proline iminopeptidase (pip) from Lactobacillus delbrueckii subsp. lactis.